Reading from the N-terminus, the 441-residue chain is MAARDTICALASGPPPSAIAIIRISGPAVAEIGKSLLASGLPEPKRAALTYIYDSDGALIDQGIALYANAPHSYTGEDTLELYLHGGPAVIDHALRGLTAIAGVRLAEPGEFTRRAFENGKLDLTEAEGVADIIEAETGAQKAQALRQLGGGLTEIYDGWREELTGTLALIEVMIDFPDEGDVPEDTARPILSRLEKIMSEIETALGDRGVGERIRDGFRVAIVGPPNAGKSSILNRLARREAAIVTDIAGTTRDVVEVRLVLGGQVVWIADTAGLRETEDVVEAEGVRRARRAAAEADLRIHVIDGTDPSPPPEQVETQDIIVFNKADQRPAILAPDGALPISVITGEGIDKLESWIAAFVSRRASSVEAPVITRARHREKLVAGLASLTAARDALVSDMGAELAGEDVRMALRQLSSVIGRVDVEDVLGAVFSKFCIGK.

(6S)-5-formyl-5,6,7,8-tetrahydrofolate contacts are provided by R23, E81, and K121. The TrmE-type G domain maps to 218-363; the sequence is GFRVAIVGPP…LESWIAAFVS (146 aa). A K(+)-binding site is contributed by N228. GTP contacts are provided by residues 228 to 233, 247 to 253, 272 to 275, and 326 to 329; these read NAGKSS, TDIAGTT, DTAG, and NKAD. S232 is a Mg(2+) binding site. K(+) is bound by residues T247, I249, and T252. Residue T253 participates in Mg(2+) binding. K441 contributes to the (6S)-5-formyl-5,6,7,8-tetrahydrofolate binding site.

Belongs to the TRAFAC class TrmE-Era-EngA-EngB-Septin-like GTPase superfamily. TrmE GTPase family. As to quaternary structure, homodimer. Heterotetramer of two MnmE and two MnmG subunits. It depends on K(+) as a cofactor.

Its subcellular location is the cytoplasm. Functionally, exhibits a very high intrinsic GTPase hydrolysis rate. Involved in the addition of a carboxymethylaminomethyl (cmnm) group at the wobble position (U34) of certain tRNAs, forming tRNA-cmnm(5)s(2)U34. The sequence is that of tRNA modification GTPase MnmE from Hyphomonas neptunium (strain ATCC 15444).